A 286-amino-acid polypeptide reads, in one-letter code: Bifunctional protein FolD (286 aa).

Position 166–168 (166–168) interacts with NADP(+); it reads GAS.

The protein belongs to the tetrahydrofolate dehydrogenase/cyclohydrolase family. As to quaternary structure, homodimer.

The enzyme catalyses (6R)-5,10-methylene-5,6,7,8-tetrahydrofolate + NADP(+) = (6R)-5,10-methenyltetrahydrofolate + NADPH. The catalysed reaction is (6R)-5,10-methenyltetrahydrofolate + H2O = (6R)-10-formyltetrahydrofolate + H(+). It participates in one-carbon metabolism; tetrahydrofolate interconversion. Its function is as follows. Catalyzes the oxidation of 5,10-methylenetetrahydrofolate to 5,10-methenyltetrahydrofolate and then the hydrolysis of 5,10-methenyltetrahydrofolate to 10-formyltetrahydrofolate. The chain is Bifunctional protein FolD from Idiomarina loihiensis (strain ATCC BAA-735 / DSM 15497 / L2-TR).